The primary structure comprises 618 residues: Probable protein disulfide-isomerase A4 (618 aa).

The signal sequence occupies residues Met1–Ser21. 3 consecutive Thioredoxin domains span residues Thr22 to Asp139, Val138 to Lys254, and Ser480 to Val609. 3 disulfide bridges follow: Cys65–Cys68, Cys176–Cys179, and Cys529–Cys532. The short motif at Lys615–Leu618 is the Prevents secretion from ER element.

It belongs to the protein disulfide isomerase family.

It localises to the endoplasmic reticulum lumen. The catalysed reaction is Catalyzes the rearrangement of -S-S- bonds in proteins.. This Caenorhabditis elegans protein is Probable protein disulfide-isomerase A4.